A 295-amino-acid polypeptide reads, in one-letter code: ATP synthase gamma chain (295 aa).

This sequence belongs to the ATPase gamma chain family. In terms of assembly, F-type ATPases have 2 components, CF(1) - the catalytic core - and CF(0) - the membrane proton channel. CF(1) has five subunits: alpha(3), beta(3), gamma(1), delta(1), epsilon(1). CF(0) has three main subunits: a, b and c.

It is found in the cell inner membrane. Produces ATP from ADP in the presence of a proton gradient across the membrane. The gamma chain is believed to be important in regulating ATPase activity and the flow of protons through the CF(0) complex. The sequence is that of ATP synthase gamma chain from Cytophaga hutchinsonii (strain ATCC 33406 / DSM 1761 / CIP 103989 / NBRC 15051 / NCIMB 9469 / D465).